The sequence spans 364 residues: Cobalt-precorrin-5B C(1)-methyltransferase (364 aa).

The protein belongs to the CbiD family.

The enzyme catalyses Co-precorrin-5B + S-adenosyl-L-methionine = Co-precorrin-6A + S-adenosyl-L-homocysteine. It functions in the pathway cofactor biosynthesis; adenosylcobalamin biosynthesis; cob(II)yrinate a,c-diamide from sirohydrochlorin (anaerobic route): step 6/10. Functionally, catalyzes the methylation of C-1 in cobalt-precorrin-5B to form cobalt-precorrin-6A. The chain is Cobalt-precorrin-5B C(1)-methyltransferase from Pseudomonas putida (strain ATCC 47054 / DSM 6125 / CFBP 8728 / NCIMB 11950 / KT2440).